A 57-amino-acid polypeptide reads, in one-letter code: uncharacterized protein (57 aa).

The chain crosses the membrane as a helical span at residues 34–54 (AALLDAAALVVIPGLLTAAAV).

The protein resides in the membrane. This is an uncharacterized protein from Dictyostelium discoideum (Social amoeba).